Here is a 1490-residue protein sequence, read N- to C-terminus: ABC transporter CDR4 (1490 aa).

The span at 1-12 (MADADTSSNSSK) shows a compositional bias: polar residues. Disordered stretches follow at residues 1–26 (MADA…GTYQ) and 53–75 (LKRQ…LSGK). Residues 1–516 (MADADTSSNS…NILRIKGNPS (516 aa)) are Cytoplasmic-facing. Over residues 58-67 (SRQESQKSNE) the composition is skewed to basic and acidic residues. The ABC transporter 1 domain occupies 151-407 (PKYLSLFFRE…FIDMGYECPQ (257 aa)). The next 6 membrane-spanning stretches (helical) occupy residues 517–537 (IHLF…SIFY), 551–571 (AALF…IFSL), 601–621 (LPTK…MVNF), 626–646 (GNFF…SHIF), 659–679 (AMTP…FVIP), and 767–787 (FGIV…LCEI). At 788–1182 (NKGAMQKGEI…VFEQNWRTPS (395 aa)) the chain is on the cytoplasmic side. The ABC transporter 2 domain maps to 846–1090 (FFWRDLTYQV…LINYFEKYGA (245 aa)). An ATP-binding site is contributed by 882 to 889 (GASGAGKT). 3 helical membrane passes run 1183–1203 (YLYS…FSFY), 1217–1237 (FSVF…LPTF), and 1268–1288 (IPWN…PVGL). A glycan (N-linked (GlcNAc...) asparagine) is linked at N1291. Transmembrane regions (helical) follow at residues 1304-1324 (FMWF…QLCI), 1333-1353 (AANL…VLVT), and 1370-1390 (FTYL…VTCA). N1424 carries an N-linked (GlcNAc...) asparagine glycan. A helical transmembrane segment spans residues 1455 to 1475 (IGIYIAFIGINIIGTFILYWF).

It belongs to the ABC transporter superfamily. ABCG family. PDR (TC 3.A.1.205) subfamily.

It is found in the membrane. This chain is ABC transporter CDR4 (CDR4), found in Candida albicans (Yeast).